The sequence spans 274 residues: Merozoite surface protein 2 (274 aa).

A signal peptide spans 1–20 (MKVIKTLSIINFFIFVTFNI). N-linked (GlcNAc...) asparagine glycosylation is found at Asn-22 and Asn-36. A disordered region spans residues 43-234 (MAESKPPTGT…SDSQKECTDG (192 aa)). The interval 44–200 (AESKPPTGTG…EQTESPELQS (157 aa)) is polymorphic region. 2 repeat units span residues 53–62 (GASGSAGSGA) and 63–72 (GASGSAGSGD). Residues 53-72 (GASGSAGSGAGASGSAGSGD) form a 2 X 10 AA tandem repeats of G-A-S-G-S-A-G-S-G-[AD] region. Over residues 53–72 (GASGSAGSGAGASGSAGSGD) the composition is skewed to gly residues. A compositionally biased stretch (low complexity) spans 91 to 121 (SSSTPATTTTTTTTTTTTTTNDAEASTSTSS). Composition is skewed to polar residues over residues 122–131 (ENPNHNNAET), 140–167 (QKSN…NVPP), and 174–202 (KSPT…QSAP). Asn-151 is a glycosylation site (N-linked (GlcNAc...) asparagine). Asn-223 carries an N-linked (GlcNAc...) asparagine glycan. Cys-231 and Cys-239 form a disulfide bridge. A glycan (N-linked (GlcNAc...) asparagine) is linked at Asn-248. Asn-248 carries GPI-anchor amidated asparagine lipidation. Residues 249-274 (SSNIASINKFVVLISAKLVLSFAIFI) constitute a propeptide, removed in mature form.

It is found in the cell membrane. Its function is as follows. May play a role in the merozoite attachment to the erythrocyte. The sequence is that of Merozoite surface protein 2 from Plasmodium falciparum (isolate kf1916).